The primary structure comprises 214 residues: pH-sensitive calcium channel (214 aa).

Topologically, residues 1–15 are cytoplasmic; it reads MQATVHESKQSIMQR. A helical membrane pass occupies residues 16–37; it reads ILTVFVFTLLIATVGLFIGQFV. The Extracellular portion of the chain corresponds to 38–44; that stretch reads PVALMLP. Residues 45-59 traverse the membrane as a helical segment; it reads LSILEVAMIILAFWM. The Cytoplasmic segment spans residues 60 to 66; that stretch reads RRRKAVG. The helical transmembrane segment at 67-86 threads the bilayer; that stretch reads YAFVYTFAFVSGITLFPIVS. Residues 87 to 95 lie on the Extracellular side of the membrane; the sequence is HYASIAGAY. A helical transmembrane segment spans residues 96–117; sequence VVLEAFGSTFVIFAVLGTIGAK. Topologically, residues 118–122 are cytoplasmic; it reads MKKDL. The chain crosses the membrane as a helical span at residues 123–146; it reads SFLWSFLLVAVLALAVVGIFNIFS. At 147–151 the chain is on the extracellular side; sequence PLNSA. The helical transmembrane segment at 152–175 threads the bilayer; that stretch reads AMMAYSVIGTIVFSLYILYDLNQI. At 176-185 the chain is on the cytoplasmic side; sequence KHRHITEDLI. A helical transmembrane segment spans residues 186–207; sequence PVMALSLYLDFINLFINLLRFF. The Extracellular segment spans residues 208-214; it reads GILSSDD.

It belongs to the BI1 family. Monomer.

It localises to the cell membrane. It carries out the reaction Ca(2+)(in) = Ca(2+)(out). The calcium-release activity is mediated by two factors: pH and transmembrane ion gradient. It was proposed, based on an MD simulation, that the conserved aspartyl dyad (Asp-171-Asp-195) regulates Ca(2+) binding, pH sensing, and the channel pore opening and closing, and that protonation of Asp-171 probably weakens its interaction with Arg-60, facilitating the opening of the channel. Another study using nanodiscs suggests that Asp-171 is not a pH sensor regulating the pore dynamics; instead, it is only involved in the gating of calcium ions. When crystallized in detergents at different pH conditions, the transition between open and closed conformations is regulated by pH. Ca(2+) binding is inhibited by Na(+), K(+), Li(+), Yb(3+) and Lu(3+), but not by Mg(2+) and Mn(2+). Calcium channel that probably plays a role in the regulation of calcium homeostasis. Uptakes calcium ions and mediates calcium flux in proteoliposomes in a pH-dependent manner. When expressed in E.coli in the presence of high extracellular calcium concentrations, shows calcium-leak activity, increasing intracellular calcium concentration. It can also mediate Ca(2+) flux from the endoplamic reticulum (ER) when expressed in permeabilized mammalian cells. Calcium transport activity is also detected in ER-like lipid vesicles. This is pH-sensitive calcium channel from Bacillus subtilis (strain 168).